A 1012-amino-acid polypeptide reads, in one-letter code: Klotho (1012 aa).

A signal peptide spans M1–A33. The Extracellular segment spans residues E34 to S981. 2 glycosyl hydrolase-1 regions span residues F57–F506 and L515–F953. N-linked (GlcNAc...) asparagine glycans are attached at residues N106, N159, N283, N344, N607, N612, and N694. Residues L982 to Y1002 form a helical membrane-spanning segment. Residues Y1003–K1012 lie on the Cytoplasmic side of the membrane.

The protein belongs to the glycosyl hydrolase 1 family. Klotho subfamily. Homodimer. Interacts with FGF23 and FGFR1. Post-translationally, N-glycosylated. In terms of tissue distribution, present in cortical renal tubules (at protein level). Soluble peptide is present in serum and cerebrospinal fluid. Expressed in kidney, placenta, small intestine and prostate. Down-regulated in renal cell carcinomas, hepatocellular carcinomas, and in chronic renal failure kidney.

Its subcellular location is the cell membrane. It localises to the apical cell membrane. It is found in the secreted. It carries out the reaction a beta-D-glucuronoside + H2O = D-glucuronate + an alcohol. Its function is as follows. May have weak glycosidase activity towards glucuronylated steroids. However, it lacks essential active site Glu residues at positions 239 and 872, suggesting it may be inactive as a glycosidase in vivo. May be involved in the regulation of calcium and phosphorus homeostasis by inhibiting the synthesis of active vitamin D. Essential factor for the specific interaction between FGF23 and FGFR1. The Klotho peptide generated by cleavage of the membrane-bound isoform may be an anti-aging circulating hormone which would extend life span by inhibiting insulin/IGF1 signaling. The sequence is that of Klotho (KL) from Homo sapiens (Human).